We begin with the raw amino-acid sequence, 292 residues long: Fat storage-inducing transmembrane protein 1 (292 aa).

Over 1–18 (MERGPVVGAGRGAGARIR) the chain is Lumenal. A helical membrane pass occupies residues 19–39 (ALLGGLVRVLLWVASALLYFG). At 40–54 (SEQAARLLGSPCLRR) the chain is on the cytoplasmic side. A helical membrane pass occupies residues 55-75 (LYHAWLAAVVIFGPLLQFHVN). The Lumenal segment spans residues 76–94 (PRTIFASHGNFFNIKFVNS). A helical membrane pass occupies residues 95-115 (AWGWTCTFLGGFVLLVVFLAT). Residues 116–141 (RRVAVTARHLSRLVVGAAVWRGAGRA) are Cytoplasmic-facing. The helical transmembrane segment at 142–162 (FLLIEDLTGSCFEPLPQGLLL) threads the bilayer. At 163–187 (HELPDRRSCLAAGHQWRGYTVSSHT) the chain is on the lumenal side. The active site involves H186. The helical transmembrane segment at 188-208 (FLLTFCCLLMAEEAAVFAKYL) threads the bilayer. Residues 209–220 (AHGLPAGAPLRL) lie on the Cytoplasmic side of the membrane. Residues 221–241 (VFLLNVLLLGLWNFLLLCTVI) form a helical membrane-spanning segment. The Lumenal segment spans residues 242–249 (YFHQYTHK). The active site involves H244. Residues 250–270 (VVGAAVGTFAWYLTYGSWYHQ) traverse the membrane as a helical segment. The Cytoplasmic portion of the chain corresponds to 271 to 292 (PWSPGSPGHGLFPRPHSIHKHN).

Belongs to the FIT family. FIT1 subfamily.

The protein resides in the endoplasmic reticulum membrane. Functionally, plays an important role in the formation of lipid droplets (LDs) which are storage organelles at the center of lipid and energy homeostasis. Directly binds to diacylglycerol (DAGs) and triacylglycerol. In Bos taurus (Bovine), this protein is Fat storage-inducing transmembrane protein 1.